The sequence spans 684 residues: Kinesin-like protein KIN-13B (684 aa).

Disordered regions lie at residues 1-31 (MSGR…SNGR) and 71-103 (GNEF…SPGL). Composition is skewed to polar residues over residues 18–31 (LSDN…SNGR) and 79–91 (TTPQ…TNQR). One can recognise a Kinesin motor domain in the interval 169-492 (KIKVVVRKRP…LRYADRVKSL (324 aa)). 258 to 265 (GQTGSGKT) contributes to the ATP binding site. Residues 574–594 (KPTIQMKSRDMPRPDMKKSNS) form a disordered region. Residues 580–594 (KSRDMPRPDMKKSNS) are compositionally biased toward basic and acidic residues. A coiled-coil region spans residues 596-626 (DNLNALLQEEEDLVNAHRKQVEDTMNIVKEE).

The protein belongs to the TRAFAC class myosin-kinesin ATPase superfamily. Kinesin family. KIN-13 subfamily.

Acts redundantly with KIN13A to modulate cell wall synthesis and cell expansion via the THE1 pathway. The sequence is that of Kinesin-like protein KIN-13B from Arabidopsis thaliana (Mouse-ear cress).